A 345-amino-acid polypeptide reads, in one-letter code: Phosphoribosylformylglycinamidine cyclo-ligase (345 aa).

This sequence belongs to the AIR synthase family.

Its subcellular location is the cytoplasm. The catalysed reaction is 2-formamido-N(1)-(5-O-phospho-beta-D-ribosyl)acetamidine + ATP = 5-amino-1-(5-phospho-beta-D-ribosyl)imidazole + ADP + phosphate + H(+). Its pathway is purine metabolism; IMP biosynthesis via de novo pathway; 5-amino-1-(5-phospho-D-ribosyl)imidazole from N(2)-formyl-N(1)-(5-phospho-D-ribosyl)glycinamide: step 2/2. The sequence is that of Phosphoribosylformylglycinamidine cyclo-ligase from Histophilus somni (strain 2336) (Haemophilus somnus).